A 267-amino-acid polypeptide reads, in one-letter code: Urease accessory protein UreD 2 (267 aa).

This sequence belongs to the UreD family. UreD, UreF and UreG form a complex that acts as a GTP-hydrolysis-dependent molecular chaperone, activating the urease apoprotein by helping to assemble the nickel containing metallocenter of UreC. The UreE protein probably delivers the nickel.

The protein localises to the cytoplasm. Its function is as follows. Required for maturation of urease via the functional incorporation of the urease nickel metallocenter. The polypeptide is Urease accessory protein UreD 2 (Synechococcus sp. (strain JA-3-3Ab) (Cyanobacteria bacterium Yellowstone A-Prime)).